Here is a 382-residue protein sequence, read N- to C-terminus: Fimbrial usher domain-containing protein YdeT (382 aa).

This is Fimbrial usher domain-containing protein YdeT (ydeT) from Escherichia coli O157:H7.